Here is a 279-residue protein sequence, read N- to C-terminus: Phosphatidylglycerol--prolipoprotein diacylglyceryl transferase (279 aa).

The next 3 helical transmembrane spans lie at 22-42 (WYGIIIACGILLGYFIAQAAL), 52-72 (LIDIIFYSAIVGFIVARIYFV), and 89-109 (IWHGGIAIHGGLIGGLISGII). Arginine 137 is a binding site for a 1,2-diacyl-sn-glycero-3-phospho-(1'-sn-glycerol). 2 helical membrane-spanning segments follow: residues 203–223 (LGETFFGYLIWYSVGRFFVEA) and 235–255 (IRVAQLVSVVLIMISVIFVIY).

It belongs to the Lgt family.

Its subcellular location is the cell membrane. The enzyme catalyses L-cysteinyl-[prolipoprotein] + a 1,2-diacyl-sn-glycero-3-phospho-(1'-sn-glycerol) = an S-1,2-diacyl-sn-glyceryl-L-cysteinyl-[prolipoprotein] + sn-glycerol 1-phosphate + H(+). The protein operates within protein modification; lipoprotein biosynthesis (diacylglyceryl transfer). In terms of biological role, catalyzes the transfer of the diacylglyceryl group from phosphatidylglycerol to the sulfhydryl group of the N-terminal cysteine of a prolipoprotein, the first step in the formation of mature lipoproteins. In Staphylococcus epidermidis (strain ATCC 35984 / DSM 28319 / BCRC 17069 / CCUG 31568 / BM 3577 / RP62A), this protein is Phosphatidylglycerol--prolipoprotein diacylglyceryl transferase.